The chain runs to 246 residues: UDP-N-acetyl-D-mannosaminuronic acid transferase (246 aa).

This sequence belongs to the glycosyltransferase 26 family.

It carries out the reaction UDP-N-acetyl-alpha-D-mannosaminouronate + N-acetyl-alpha-D-glucosaminyl-di-trans,octa-cis-undecaprenyl diphosphate = beta-D-ManNAcA-(1-&gt;4)-alpha-D-GlcNAc-di-trans,octa-cis-undecaprenyl diphosphate + UDP + H(+). It functions in the pathway bacterial outer membrane biogenesis; enterobacterial common antigen biosynthesis. In terms of biological role, catalyzes the synthesis of Und-PP-GlcNAc-ManNAcA (Lipid II), the second lipid-linked intermediate involved in enterobacterial common antigen (ECA) synthesis. The sequence is that of UDP-N-acetyl-D-mannosaminuronic acid transferase from Escherichia coli (strain K12).